The primary structure comprises 160 residues: Ribonuclease P protein component 2 (160 aa).

The protein belongs to the eukaryotic/archaeal RNase P protein component 2 family. As to quaternary structure, consists of a catalytic RNA component and at least 4-5 protein subunits.

Its subcellular location is the cytoplasm. The enzyme catalyses Endonucleolytic cleavage of RNA, removing 5'-extranucleotides from tRNA precursor.. In terms of biological role, part of ribonuclease P, a protein complex that generates mature tRNA molecules by cleaving their 5'-ends. This Methanoculleus marisnigri (strain ATCC 35101 / DSM 1498 / JR1) protein is Ribonuclease P protein component 2.